A 362-amino-acid polypeptide reads, in one-letter code: Probable dual-specificity RNA methyltransferase RlmN (362 aa).

Glu91 (proton acceptor) is an active-site residue. A Radical SAM core domain is found at 97–329; the sequence is QHYGLSVCVT…KKNGVNCVVR (233 aa). Cysteines 104 and 340 form a disulfide. [4Fe-4S] cluster-binding residues include Cys111, Cys115, and Cys118. Residues 163-164, Ser195, 218-220, and Asn296 each bind S-adenosyl-L-methionine; these read GE and SLH. Cys340 functions as the S-methylcysteine intermediate in the catalytic mechanism.

Belongs to the radical SAM superfamily. RlmN family. [4Fe-4S] cluster serves as cofactor.

Its subcellular location is the cytoplasm. It carries out the reaction adenosine(2503) in 23S rRNA + 2 reduced [2Fe-2S]-[ferredoxin] + 2 S-adenosyl-L-methionine = 2-methyladenosine(2503) in 23S rRNA + 5'-deoxyadenosine + L-methionine + 2 oxidized [2Fe-2S]-[ferredoxin] + S-adenosyl-L-homocysteine. It catalyses the reaction adenosine(37) in tRNA + 2 reduced [2Fe-2S]-[ferredoxin] + 2 S-adenosyl-L-methionine = 2-methyladenosine(37) in tRNA + 5'-deoxyadenosine + L-methionine + 2 oxidized [2Fe-2S]-[ferredoxin] + S-adenosyl-L-homocysteine. In terms of biological role, specifically methylates position 2 of adenine 2503 in 23S rRNA and position 2 of adenine 37 in tRNAs. The polypeptide is Probable dual-specificity RNA methyltransferase RlmN (Streptococcus gordonii (strain Challis / ATCC 35105 / BCRC 15272 / CH1 / DL1 / V288)).